Reading from the N-terminus, the 242-residue chain is uncharacterized protein (242 aa).

Residues 8–76 (TPLYIQLKQI…QGKGTFVKSP (69 aa)) enclose the HTH gntR-type domain. Residues 36 to 55 (ENELCTKYNVSRITVRKAIL) constitute a DNA-binding region (H-T-H motif).

This is an uncharacterized protein from Bacillus subtilis (strain 168).